A 317-amino-acid chain; its full sequence is UV DNA damage endonuclease (317 aa).

The protein belongs to the uve1/UvsE family.

Its function is as follows. Component in a DNA repair pathway. Removal of UV LIGHT damaged nucleotides. Recognizes pyrimidine dimers and cleave a phosphodiester bond immediately 5' to the lesion. This is UV DNA damage endonuclease from Bacillus mycoides (strain KBAB4) (Bacillus weihenstephanensis).